The sequence spans 193 residues: Xanthine phosphoribosyltransferase (193 aa).

Xanthine is bound by residues L20 and T27. 128 to 132 is a 5-phospho-alpha-D-ribose 1-diphosphate binding site; the sequence is ANGQA. K156 contacts xanthine.

Belongs to the purine/pyrimidine phosphoribosyltransferase family. Xpt subfamily. In terms of assembly, homodimer.

It localises to the cytoplasm. It carries out the reaction XMP + diphosphate = xanthine + 5-phospho-alpha-D-ribose 1-diphosphate. Its pathway is purine metabolism; XMP biosynthesis via salvage pathway; XMP from xanthine: step 1/1. Converts the preformed base xanthine, a product of nucleic acid breakdown, to xanthosine 5'-monophosphate (XMP), so it can be reused for RNA or DNA synthesis. The chain is Xanthine phosphoribosyltransferase from Streptococcus pneumoniae serotype 2 (strain D39 / NCTC 7466).